Reading from the N-terminus, the 116-residue chain is G antigen 2D (116 aa).

Positions 1–116 are disordered; it reads MSWRGRSTYR…PEEGEKQSQC (116 aa). Composition is skewed to acidic residues over residues 31-44 and 86-95; these read FSDE…EEGE and ECEDGPDGQE. Basic and acidic residues predominate over residues 102-116; it reads EEVKTPEEGEKQSQC.

Belongs to the GAGE family. Not expressed in normal tissues, except in testis, but expressed by a large proportion of tumors of various histological origins.

The polypeptide is G antigen 2D (GAGE2D) (Homo sapiens (Human)).